Reading from the N-terminus, the 306-residue chain is Peroxisome biogenesis factor 2 (306 aa).

The Peroxisomal matrix segment spans residues 1-15 (MAASENNMEEINPVL). Residues 16 to 42 (RISQLDAIELNKALEQLIWSQFSSCFQ) traverse the membrane as a helical segment. Residues 43 to 48 (GFKPGL) lie on the Cytoplasmic side of the membrane. Residues 49-74 (LTRFEPEIKASLCLFLWRYTIYTKNA) form a helical membrane-spanning segment. Topologically, residues 75-98 (TVGQTILNMQYKNDLAVTKKYRPL) are peroxisomal matrix. Residues 99–125 (NKQQKVWFALFLVGGKWLEERSFDLFS) traverse the membrane as a helical segment. Residues 126-134 (NHPFGASFQ) lie on the Cytoplasmic side of the membrane. The chain crosses the membrane as a helical span at residues 135 to 161 (RTKYFLNAISGLLKFGALLNFLIFLQQ). At 162-188 (GKFATLTERLLGIRSVFSRPQDVRQVG) the chain is on the peroxisomal matrix side. The chain crosses the membrane as a helical span at residues 189–212 (FEYMNREILWHGFAEFLIFLLPLI). The Cytoplasmic segment spans residues 213–306 (NTQKLKSKLF…KIEISEVHTL (94 aa)). 8 residues coordinate Zn(2+): Cys245, Cys248, Cys260, His262, Cys265, Cys268, Cys281, and Cys284. An RING-type zinc finger spans residues 245–285 (CCLCGEWPAMPHTIGCSHVFCYYCIKSNYMSDMYFTCPKCS).

This sequence belongs to the pex2/pex10/pex12 family. Component of the PEX2-PEX10-PEX12 retrotranslocation channel.

The protein localises to the peroxisome membrane. It carries out the reaction [E2 ubiquitin-conjugating enzyme]-S-ubiquitinyl-L-cysteine + [acceptor protein]-L-cysteine = [E2 ubiquitin-conjugating enzyme]-L-cysteine + [acceptor protein]-S-ubiquitinyl-L-cysteine.. It catalyses the reaction S-ubiquitinyl-[E2 ubiquitin-conjugating enzyme]-L-cysteine + [acceptor protein]-L-lysine = [E2 ubiquitin-conjugating enzyme]-L-cysteine + N(6)-ubiquitinyl-[acceptor protein]-L-lysine.. It participates in protein modification; protein ubiquitination. E3 ubiquitin-protein ligase component of a retrotranslocation channel required for peroxisome organization by mediating export of the PEX5 receptor from peroxisomes to the cytosol, thereby promoting PEX5 recycling. The retrotranslocation channel is composed of PEX2, PEX10 and PEX12; each subunit contributing transmembrane segments that coassemble into an open channel that specifically allows the passage of PEX5 through the peroxisomal membrane. PEX2 also regulates peroxisome organization by acting as a E3 ubiquitin-protein ligase. This is Peroxisome biogenesis factor 2 from Xenopus laevis (African clawed frog).